The primary structure comprises 377 residues: Ribosomal RNA large subunit methyltransferase G (377 aa).

This sequence belongs to the methyltransferase superfamily. RlmG family.

Its subcellular location is the cytoplasm. It carries out the reaction guanosine(1835) in 23S rRNA + S-adenosyl-L-methionine = N(2)-methylguanosine(1835) in 23S rRNA + S-adenosyl-L-homocysteine + H(+). Functionally, specifically methylates the guanine in position 1835 (m2G1835) of 23S rRNA. The protein is Ribosomal RNA large subunit methyltransferase G of Streptomyces coelicolor (strain ATCC BAA-471 / A3(2) / M145).